The primary structure comprises 349 residues: Inhibitor of nuclear factor kappa-B kinase-interacting protein (349 aa).

The span at 1 to 11 (MSEVKSRKKSG) shows a compositional bias: basic residues. Residues 1–39 (MSEVKSRKKSGTKGAPAEPGKRNEGGKSPEARGGGGRGW) are disordered. The segment covering 19 to 30 (PGKRNEGGKSPE) has biased composition (basic and acidic residues). Residues 45–61 (GVSLLSLGTCLGLAWFV) traverse the membrane as a helical segment. A glycan (N-linked (GlcNAc...) asparagine) is linked at Asn-145. Coiled-coil stretches lie at residues 183 to 216 (GLVT…IGDL) and 304 to 347 (IGRL…HISD). An N-linked (GlcNAc...) asparagine glycan is attached at Asn-327.

N-glycosylated.

Its subcellular location is the endoplasmic reticulum membrane. In terms of biological role, target of p53/TP53 with pro-apoptotic function. This Bos taurus (Bovine) protein is Inhibitor of nuclear factor kappa-B kinase-interacting protein (IKBIP).